Consider the following 619-residue polypeptide: Serine/threonine-protein kinase pkn1 (619 aa).

Positions 15 to 302 constitute a Protein kinase domain; sequence YRILYRKGQS…SSQNLPQAVL (288 aa). 21–29 serves as a coordination point for ATP; sequence KGQSLWSED. Glutamate 141 functions as the Proton acceptor in the catalytic mechanism.

It belongs to the protein kinase superfamily. Ser/Thr protein kinase family. Autophosphorylated on serine and threonine residues.

The catalysed reaction is L-seryl-[protein] + ATP = O-phospho-L-seryl-[protein] + ADP + H(+). It carries out the reaction L-threonyl-[protein] + ATP = O-phospho-L-threonyl-[protein] + ADP + H(+). Together with the serine/threonine kinase PknD, may play a role in the specific interactions with host proteins during intracellular growth. The sequence is that of Serine/threonine-protein kinase pkn1 (pkn1) from Chlamydia pneumoniae (Chlamydophila pneumoniae).